The sequence spans 92 residues: Protein LSO2 (92 aa).

2 stretches are compositionally biased toward basic and acidic residues: residues 1–10 (MGKRFSESAA) and 38–72 (EASKWEQGSRKENAKKLEEEQKRQEKARAKKERDA). Positions 1–92 (MGKRFSESAA…KGGKGKRKMK (92 aa)) are disordered. A coiled-coil region spans residues 17–80 (ARKRDQAHAK…DALLTAEEEQ (64 aa)).

It belongs to the CCDC124 family. As to quaternary structure, associates with translationally inactive ribosomes in the nonrotated state. LSO2 bridges the decoding sites of the small with the GTPase activating center (GAC) of the large subunit. This position allows accommodation of the DOM34-dependent ribosome recycling system, which splits LSO2-containing ribosomes.

Its subcellular location is the nucleus. It localises to the cytoplasm. Ribosome-binding protein involved in ribosome hibernation by associating with translationally inactive ribosomes. Required for translational recovery after starvation from stationary phase. May facilitate rapid translation reactivation by stabilizing the recycling-competent state of inactive ribosomes. The protein is Protein LSO2 of Saccharomyces cerevisiae (strain ATCC 204508 / S288c) (Baker's yeast).